A 739-amino-acid polypeptide reads, in one-letter code: Phosphoribosylformylglycinamidine synthase subunit PurL (739 aa).

His54 is a catalytic residue. ATP contacts are provided by Tyr57 and Lys96. Mg(2+) is bound at residue Glu98. Substrate is bound by residues 99–102 (SHNH) and Arg121. The active-site Proton acceptor is His100. Asp122 lines the Mg(2+) pocket. Gln245 is a binding site for substrate. Residue Asp275 coordinates Mg(2+). Substrate is bound at residue 319–321 (ESQ). ATP is bound by residues Asp504 and Gly541. Asn542 lines the Mg(2+) pocket. Residue Ser544 coordinates substrate.

The protein belongs to the FGAMS family. Monomer. Part of the FGAM synthase complex composed of 1 PurL, 1 PurQ and 2 PurS subunits.

It localises to the cytoplasm. It carries out the reaction N(2)-formyl-N(1)-(5-phospho-beta-D-ribosyl)glycinamide + L-glutamine + ATP + H2O = 2-formamido-N(1)-(5-O-phospho-beta-D-ribosyl)acetamidine + L-glutamate + ADP + phosphate + H(+). It participates in purine metabolism; IMP biosynthesis via de novo pathway; 5-amino-1-(5-phospho-D-ribosyl)imidazole from N(2)-formyl-N(1)-(5-phospho-D-ribosyl)glycinamide: step 1/2. Part of the phosphoribosylformylglycinamidine synthase complex involved in the purines biosynthetic pathway. Catalyzes the ATP-dependent conversion of formylglycinamide ribonucleotide (FGAR) and glutamine to yield formylglycinamidine ribonucleotide (FGAM) and glutamate. The FGAM synthase complex is composed of three subunits. PurQ produces an ammonia molecule by converting glutamine to glutamate. PurL transfers the ammonia molecule to FGAR to form FGAM in an ATP-dependent manner. PurS interacts with PurQ and PurL and is thought to assist in the transfer of the ammonia molecule from PurQ to PurL. The chain is Phosphoribosylformylglycinamidine synthase subunit PurL from Lactococcus lactis subsp. cremoris (Streptococcus cremoris).